The primary structure comprises 716 residues: Segment polarity protein dishevelled homolog DVL-3 (716 aa).

Positions 1-82 (MGETKIIYHL…RVVSWLVSAE (82 aa)) constitute a DIX domain. At Arg-27 the chain carries Omega-N-methylarginine. Residues Ser-48 and Ser-125 each carry the phosphoserine modification. The interval 85 to 235 (HPEPAPFCAD…VSRIERSSSF (151 aa)) is disordered. Residues 142–156 (QRERPRRRDGPEHAA) show a composition bias toward basic and acidic residues. A compositionally biased stretch (low complexity) spans 175–190 (SSSTLMSSELETTSFF). Phosphoserine is present on Ser-192. A compositionally biased stretch (low complexity) spans 199–212 (SRFSSSTEQSSASR). An Omega-N-methylarginine modification is found at Arg-212. Positions 213–226 (LMRRHKRRRRKQKV) are enriched in basic residues. Residues 249 to 321 (TVTLNMEKYN…NDDAVRVLRE (73 aa)) enclose the PDZ domain. Asymmetric dimethylarginine; by PRMT1; alternate is present on Arg-271. Arg-271 and Arg-342 each carry symmetric dimethylarginine; by PRMT7; alternate. Arg-342 bears the Omega-N-methylarginine; alternate mark. A Phosphothreonine modification is found at Thr-346. Positions 422–496 (PESGLEVRDR…SEQCYYIFGD (75 aa)) constitute a DEP domain. Residues 546-691 (PYNPHPGFPE…PPGRDLASVP (146 aa)) form a disordered region. Positions 565-581 (ASSQHSEGSRSSGSNRS) are enriched in low complexity. Composition is skewed to basic and acidic residues over residues 582–595 (GSDR…KAGD) and 604–622 (ESDH…RAPS). The residue at position 614 (Arg-614) is a Symmetric dimethylarginine; by PRMT7. Composition is skewed to pro residues over residues 653-663 (YGPPGVPPLYG) and 670-682 (TPPP…PGAP). Position 697 is a phosphoserine (Ser-697). Arg-698 is modified (omega-N-methylarginine; alternate). Position 698 is a dimethylated arginine; alternate (Arg-698). A Phosphoserine modification is found at Ser-700.

This sequence belongs to the DSH family. In terms of assembly, interacts (via the PDZ domain) with the C-terminal regions of VANGL1 and VANGL2. Interacts (via the region containing both the PDZ and DEP domains) with LRRFIP2; the DIX domain may inhibit this interaction. Interacts with CYLD. Interacts with CEP164 and DAB2. Interacts with DCDC2. Interacts with FOXK1 and FOXK2. Interacts with DAAM2. In terms of processing, ubiquitinated. Deubiquitinated by CYLD, which acts on 'Lys-63'-linked ubiquitin chains. Phosphorylated by CSNK1D. Post-translationally, arginine methylation may function as a switch in regulation of function in Wnt signaling. In terms of tissue distribution, ubiquitous.

It localises to the cytoplasm. Functionally, involved in the signal transduction pathway mediated by multiple Wnt genes. This chain is Segment polarity protein dishevelled homolog DVL-3 (Dvl3), found in Mus musculus (Mouse).